The primary structure comprises 485 residues: Glutamyl-tRNA(Gln) amidotransferase subunit A (485 aa).

Residues lysine 79 and serine 154 each act as charge relay system in the active site. Residue serine 178 is the Acyl-ester intermediate of the active site.

This sequence belongs to the amidase family. GatA subfamily. As to quaternary structure, heterotrimer of A, B and C subunits.

The enzyme catalyses L-glutamyl-tRNA(Gln) + L-glutamine + ATP + H2O = L-glutaminyl-tRNA(Gln) + L-glutamate + ADP + phosphate + H(+). Functionally, allows the formation of correctly charged Gln-tRNA(Gln) through the transamidation of misacylated Glu-tRNA(Gln) in organisms which lack glutaminyl-tRNA synthetase. The reaction takes place in the presence of glutamine and ATP through an activated gamma-phospho-Glu-tRNA(Gln). In Clostridium botulinum (strain Loch Maree / Type A3), this protein is Glutamyl-tRNA(Gln) amidotransferase subunit A.